Here is a 247-residue protein sequence, read N- to C-terminus: HTH-type transcriptional regulator SarU (247 aa).

DNA-binding regions (H-T-H motif) lie at residues 53-76 and 178-201; these read LKEI…SLSK and LKDL…RLNN.

The protein belongs to the SarA family.

The protein localises to the cytoplasm. Its function is as follows. Positive regulator of RNAII and RNAIII in a cell density-dependent manner. It can contribute to the expression of virulence genes controlled by agr. May also regulate target genes via an agr-independent pathway. This Staphylococcus aureus (strain NCTC 8325 / PS 47) protein is HTH-type transcriptional regulator SarU (sarU).